The sequence spans 254 residues: MSDPRHIAIIMDGNGRWAKARGLPRSAGHRAGVEALREIVRAAGDRGLGYLTLFAFSSENWTRPSGEVSDLLGLLKLFIRRDLAELHRNNVRVNIIGERAELAADIRALLNEAESLTHRNTGLNLVIAFNYGSRDEIVRAVRSLARDVAAGLLDPSSISAELVSANLDTAGIPDPDLIIRTSGEMRLSNFLLWQAAYSEFLFLPCHWPDFRPTDLDAAYETFRQRERRFGGVEPRASADAEEEILCPSTKGAAV.

The active site involves Asp12. Asp12 contacts Mg(2+). Residues 13–16 (GNGR), Trp17, Arg25, His29, and 57–59 (SSE) each bind substrate. Asn60 (proton acceptor) is an active-site residue. Residues Trp61, Arg63, Arg180, and 186 to 188 (RLS) contribute to the substrate site. Glu199 contributes to the Mg(2+) binding site.

It belongs to the UPP synthase family. In terms of assembly, homodimer. Mg(2+) serves as cofactor.

Its function is as follows. Catalyzes the condensation of isopentenyl diphosphate (IPP) with allylic pyrophosphates generating different type of terpenoids. In Brucella suis biovar 1 (strain 1330), this protein is Isoprenyl transferase.